A 573-amino-acid chain; its full sequence is MTDRLASLFESAVSMLPMSEARSLDLFTEITNYDESACDAWIGRIRCGDTDRVTLFRAWYSRRNFGQLSGSVQISMSTLNARIAIGGLYGDITYPVTSPLAITMGFAACEAAQGNYADAMEALEAAPVAGSEHLVAWMKAVVYGAAERWTDVIDQVKSAGKWPDKFLAGAAGVAHGVAAANLALFTEAERRLTEANDSPAGEACARAIAWYLAMARRSQGNESAAVALLEWLQTTHPEPKVAAALKDPSYRLKTTTAEQIASRADPWDPGSVVTDNSGRERLLAEAQAELDRQIGLTRVKNQIERYRAATLMARVRAAKGMKVAQPSKHMIFTGPPGTGKTTIARVVANILAGLGVIAEPKLVETSRKDFVAEYEGQSAVKTAKTIDQALGGVLFIDEAYALVQERDGRTDPFGQEALDTLLARMENDRDRLVVIIAGYSSDIDRLLETNEGLRSRFATRIEFDTYSPEELLEIANVIAAADDSALTAEAAENFLQAAKQLEQRMLRGRRALDVAGNGRYARQLVEASEQCRDMRLAQVLDIDTLDEDRLREINGSDMAEAIAAVHAHLNMRE.

334 to 341 (GPPGTGKT) provides a ligand contact to ATP.

The protein belongs to the CbxX/CfxQ family. As to quaternary structure, part of the ESX-1 / type VII secretion system (T7SS), which is composed of cytosolic and membrane components.

The protein localises to the cytoplasm. Its function is as follows. Part of the ESX-1 specialized secretion system, which delivers several virulence factors to host cells during infection, including the key virulence factors EsxA (ESAT-6) and EsxB (CFP-10). EccA1 exhibits ATPase activity and may provide energy for the export of ESX-1 substrates. This chain is ESX-1 secretion system protein EccA1, found in Mycobacterium tuberculosis (strain CDC 1551 / Oshkosh).